Reading from the N-terminus, the 36-residue chain is Photosystem I reaction center subunit VIII (36 aa).

A helical transmembrane segment spans residues 5–27; it reads FLPSILVPLVGLVFPAIAIASLF.

It belongs to the PsaI family.

The protein localises to the plastid. It localises to the chloroplast thylakoid membrane. Functionally, may help in the organization of the PsaL subunit. In Chaetosphaeridium globosum (Charophycean green alga), this protein is Photosystem I reaction center subunit VIII.